The sequence spans 211 residues: Uracil phosphoribosyltransferase (211 aa).

Residues R78, R103, and 130–138 (DPMLATGGT) each bind 5-phospho-alpha-D-ribose 1-diphosphate. Uracil contacts are provided by residues I196 and 201 to 203 (GDA). Position 202 (D202) interacts with 5-phospho-alpha-D-ribose 1-diphosphate.

It belongs to the UPRTase family. Mg(2+) serves as cofactor.

The enzyme catalyses UMP + diphosphate = 5-phospho-alpha-D-ribose 1-diphosphate + uracil. It participates in pyrimidine metabolism; UMP biosynthesis via salvage pathway; UMP from uracil: step 1/1. Its activity is regulated as follows. Allosterically activated by GTP. Its function is as follows. Catalyzes the conversion of uracil and 5-phospho-alpha-D-ribose 1-diphosphate (PRPP) to UMP and diphosphate. The chain is Uracil phosphoribosyltransferase from Beutenbergia cavernae (strain ATCC BAA-8 / DSM 12333 / CCUG 43141 / JCM 11478 / NBRC 16432 / NCIMB 13614 / HKI 0122).